A 188-amino-acid chain; its full sequence is Succinate-acetate/proton symporter SatP (188 aa).

Residues 1–13 (MGNTKLANPAPLG) are Cytoplasmic-facing. Residues 14-34 (LMGFGMTTILLNLHNVGYFAL) form a helical membrane-spanning segment. Asp-35 is a topological domain (periplasmic). Residues 36–56 (GIILAMGIFYGGIAQIFAGLL) traverse the membrane as a helical segment. Residues 57 to 63 (EYKKGNT) lie on the Cytoplasmic side of the membrane. A helical membrane pass occupies residues 64 to 84 (FGLTAFTSYGSFWLTLVAILL). The Periplasmic portion of the chain corresponds to 85-97 (MPKLGLTDAPNAQ). Residues 98 to 118 (FLGVYLGLWGVFTLFMFFGTL) traverse the membrane as a helical segment. Topologically, residues 119-122 (KGAR) are cytoplasmic. Residues 123–143 (VLQFVFFSLTVLFALLAIGNI) form a helical membrane-spanning segment. At 144–148 (AGNAA) the chain is on the periplasmic side. The helical transmembrane segment at 149–169 (IIHFAGWIGLICGASAIYLAM) threads the bilayer. The Cytoplasmic portion of the chain corresponds to 170–188 (GEVLNEQFGRTVLPIGESH).

The protein belongs to the acetate uptake transporter (AceTr) (TC 2.A.96) family.

It is found in the cell inner membrane. Its function is as follows. Uptake of acetate and succinate. Transport is energetically dependent on the protonmotive force. This is Succinate-acetate/proton symporter SatP (satP) from Escherichia coli O157:H7.